Consider the following 168-residue polypeptide: Photosystem I assembly protein Ycf3 (168 aa).

TPR repeat units follow at residues 35–68 (AFTY…EIDP), 72–105 (SYIL…NPFL), and 120–153 (GEQA…TPGN).

Belongs to the Ycf3 family.

Its subcellular location is the plastid. It is found in the chloroplast thylakoid membrane. Functionally, essential for the assembly of the photosystem I (PSI) complex. May act as a chaperone-like factor to guide the assembly of the PSI subunits. This chain is Photosystem I assembly protein Ycf3, found in Calycanthus floridus var. glaucus (Eastern sweetshrub).